A 334-amino-acid polypeptide reads, in one-letter code: tRNA-dihydrouridine synthase B (334 aa).

FMN-binding positions include 16–18 (PMA) and Gln-70. The Proton donor role is filled by Cys-100. Residues Lys-139, 200–202 (NGD), and 224–225 (GR) contribute to the FMN site.

Belongs to the Dus family. DusB subfamily. It depends on FMN as a cofactor.

It catalyses the reaction a 5,6-dihydrouridine in tRNA + NAD(+) = a uridine in tRNA + NADH + H(+). It carries out the reaction a 5,6-dihydrouridine in tRNA + NADP(+) = a uridine in tRNA + NADPH + H(+). Catalyzes the synthesis of 5,6-dihydrouridine (D), a modified base found in the D-loop of most tRNAs, via the reduction of the C5-C6 double bond in target uridines. In Serratia marcescens, this protein is tRNA-dihydrouridine synthase B.